A 154-amino-acid chain; its full sequence is SsrA-binding protein (154 aa).

Positions 131-154 (DKRQDLKQKEAKRDIERAFKERQQ) are disordered. Over residues 132 to 154 (KRQDLKQKEAKRDIERAFKERQQ) the composition is skewed to basic and acidic residues.

It belongs to the SmpB family.

The protein localises to the cytoplasm. In terms of biological role, required for rescue of stalled ribosomes mediated by trans-translation. Binds to transfer-messenger RNA (tmRNA), required for stable association of tmRNA with ribosomes. tmRNA and SmpB together mimic tRNA shape, replacing the anticodon stem-loop with SmpB. tmRNA is encoded by the ssrA gene; the 2 termini fold to resemble tRNA(Ala) and it encodes a 'tag peptide', a short internal open reading frame. During trans-translation Ala-aminoacylated tmRNA acts like a tRNA, entering the A-site of stalled ribosomes, displacing the stalled mRNA. The ribosome then switches to translate the ORF on the tmRNA; the nascent peptide is terminated with the 'tag peptide' encoded by the tmRNA and targeted for degradation. The ribosome is freed to recommence translation, which seems to be the essential function of trans-translation. This Listeria innocua serovar 6a (strain ATCC BAA-680 / CLIP 11262) protein is SsrA-binding protein.